A 145-amino-acid polypeptide reads, in one-letter code: DnaJ homolog subfamily B member 3 (145 aa).

Residues 1 to 69 (MVDYYEVLDV…KKRDIYDRYG (69 aa)) form the J domain.

As to expression, expressed in sperm (at protein level).

May operate as a co-chaperone of the male germ cell- and haploid stage-specific Hsp70 proteins. The protein is DnaJ homolog subfamily B member 3 (DNAJB3) of Homo sapiens (Human).